The chain runs to 233 residues: 4'-phosphopantetheinyl transferase psf-1 (233 aa).

D110, E112, and E154 together coordinate Mg(2+). Positions 161-192 (GKGISYGLSSFTARLSEDGQATLRLPDHEAPC) are peptidyl carrier protein binding.

This sequence belongs to the P-Pant transferase superfamily. Gsp/Sfp/HetI/AcpT family. Mg(2+) serves as cofactor.

It carries out the reaction apo-[peptidyl-carrier protein] + CoA = holo-[peptidyl-carrier protein] + adenosine 3',5'-bisphosphate + H(+). In terms of biological role, probably activates the peptidyl carrier protein (PCP) domains of surfactin synthetase by transferring the 4'-phosphopantetheinyl moiety of coenzyme A (CoA) to a serine residue. Required for the production of the lipopeptide antibiotic, surfactin. In Bacillus pumilus (Bacillus mesentericus), this protein is 4'-phosphopantetheinyl transferase psf-1 (psf-1).